The following is a 330-amino-acid chain: Zinc finger protein sdz-12 (330 aa).

5 C2H2-type zinc fingers span residues Pro27 to His48, Phe63 to His85, Lys91 to His113, Phe120 to His144, and Ala153 to His176. Over residues Ser183–Pro195 the composition is skewed to low complexity. The segment at Ser183–Ser203 is disordered. The C2H2-type 6 zinc finger occupies Phe271 to His293.

Belongs to the krueppel C2H2-type zinc-finger protein family. Expressed in the somatic gonad.

Its function is as follows. Together with ehn-3, may play a role in gonadogenesis. This Caenorhabditis elegans protein is Zinc finger protein sdz-12.